Consider the following 755-residue polypeptide: Anaphase-promoting complex subunit 5 (755 aa).

Position 195 is a phosphoserine (Ser195). TPR repeat units follow at residues 209-249, 250-300, 301-337, 338-378, 379-418, 419-466, 467-500, 501-540, 541-580, 581-620, 621-660, 661-696, and 697-736; these read QKQA…FNPD, FAEA…GRSL, RYAA…SNDH, VCLQ…YLAS, LGIQ…SELI, DISI…TESF, AVAL…FPPN, SQHA…ALNS, IEGV…TEMV, ISVL…QYLA, SETV…ILDK, GRAM…NLNE, and AKNY…CAML. A Phosphothreonine modification is found at Thr232.

It belongs to the APC5 family. In terms of assembly, the mammalian APC/C is composed at least of 14 distinct subunits ANAPC1, ANAPC2, CDC27/APC3, ANAPC4, ANAPC5, CDC16/APC6, ANAPC7, CDC23/APC8, ANAPC10, ANAPC11, CDC26/APC12, ANAPC13, ANAPC15 and ANAPC16 that assemble into a complex of at least 19 chains with a combined molecular mass of around 1.2 MDa; APC/C interacts with FZR1 and FBXO5.

The protein resides in the nucleus. It localises to the cytoplasm. The protein localises to the cytoskeleton. It is found in the spindle. The protein operates within protein modification; protein ubiquitination. In terms of biological role, component of the anaphase promoting complex/cyclosome (APC/C), a cell cycle-regulated E3 ubiquitin ligase that controls progression through mitosis and the G1 phase of the cell cycle. The APC/C complex acts by mediating ubiquitination and subsequent degradation of target proteins: it mainly mediates the formation of 'Lys-11'-linked polyubiquitin chains and, to a lower extent, the formation of 'Lys-48'- and 'Lys-63'-linked polyubiquitin chains. The APC/C complex catalyzes assembly of branched 'Lys-11'-/'Lys-48'-linked branched ubiquitin chains on target proteins. In Homo sapiens (Human), this protein is Anaphase-promoting complex subunit 5 (ANAPC5).